Reading from the N-terminus, the 370-residue chain is sn-glycerol-3-phosphate import ATP-binding protein UgpC (370 aa).

Residues 4-235 (LRLDGIRKRY…PATRFVASFL (232 aa)) form the ABC transporter domain. ATP is bound at residue 37–44 (GPSGCGKS).

It belongs to the ABC transporter superfamily. sn-glycerol-3-phosphate importer (TC 3.A.1.1.3) family. As to quaternary structure, the complex is composed of two ATP-binding proteins (UgpC), two transmembrane proteins (UgpA and UgpE) and a solute-binding protein (UgpB).

The protein localises to the cell inner membrane. The catalysed reaction is sn-glycerol 3-phosphate(out) + ATP + H2O = sn-glycerol 3-phosphate(in) + ADP + phosphate + H(+). Its function is as follows. Part of the ABC transporter complex UgpBAEC involved in sn-glycerol-3-phosphate (G3P) import. Responsible for energy coupling to the transport system. The chain is sn-glycerol-3-phosphate import ATP-binding protein UgpC from Chromohalobacter salexigens (strain ATCC BAA-138 / DSM 3043 / CIP 106854 / NCIMB 13768 / 1H11).